Here is a 219-residue protein sequence, read N- to C-terminus: MGQKIHPLGFRLGVTQSHLSNWCVQPSQYSELLQEDEKLRGCIKEYVRKYVRTAENYGGIDRIEIQRKTSAIKVEIHTGFPKLFVEKLGPRLKEIRREMQNTLQKSKHLKFIISLAEVEKPYAKATILAEYIAVQVERRVAFRKTIKKAIQLAKEQGNVKGIKIQIAGRLNGAEIARSEWAREGRVPLQTLRAQIDYCHYPAHTIYGVLGIRVWIFQEK.

Residues Val47–Glu119 form the KH type-2 domain.

The protein belongs to the universal ribosomal protein uS3 family. As to quaternary structure, part of the 30S ribosomal subunit.

It localises to the plastid. The protein localises to the chloroplast. This Staurastrum punctulatum (Green alga) protein is Small ribosomal subunit protein uS3c (rps3).